The chain runs to 226 residues: Glutathione S-transferase-like protein gedE (226 aa).

The GST N-terminal domain occupies L4 to H85. The GST C-terminal domain maps to D92–S226.

This sequence belongs to the GST superfamily.

The protein operates within secondary metabolite biosynthesis. Glutathione S-transferase-like protein; part of the gene cluster that mediates the biosynthesis of geodin, an intermediate in the biosynthesis of other natural products. The pathway begins with the synthesis of atrochrysone thioester by the polyketide synthase (PKS) gedC. The atrochrysone carboxyl ACP thioesterase gedB then breaks the thioester bond and releases the atrochrysone carboxylic acid from gedC. The atrochrysone carboxylic acid is then converted to atrochrysone which is further transformed into emodinanthrone. The next step is performed by the emodinanthrone oxygenase gedH that catalyzes the oxidation of emodinanthrone to emodin. Emodin O-methyltransferase encoded probably by gedA then catalyzes methylation of the 8-hydroxy group of emodin to form questin. Ring cleavage of questin by questin oxidase gedK leads to desmethylsulochrin via several intermediates including questin epoxide. Another methylation step probably catalyzed by methyltransferase gedG leads to the formation of sulochrin which is further converted to dihydrogeodin by the sulochrin halogenase gedL. Finally, the dihydrogeodin oxidase gedJ catalyzes the stereospecific phenol oxidative coupling reaction converting dihydrogeodin to geodin. This Aspergillus terreus (strain NIH 2624 / FGSC A1156) protein is Glutathione S-transferase-like protein gedE.